The following is a 371-amino-acid chain: Deoxyhypusine synthase (371 aa).

NAD(+) contacts are provided by residues 107 to 111 (SNLIS), 133 to 135 (TTG), Glu139, and Asp240. 138–139 (EE) is a spermidine binding site. Asp245 contributes to the spermidine binding site. Residue Gly287 coordinates NAD(+). His292 contacts spermidine. An NAD(+)-binding site is contributed by 312-313 (TA). Residues 318–320 (GSD) and 327–333 (EAVSWGK) contribute to the spermidine site. Lys333 (nucleophile) is an active-site residue. 346 to 347 (DA) contributes to the NAD(+) binding site.

It belongs to the deoxyhypusine synthase family. NAD(+) is required as a cofactor. As to expression, expressed in shoot tips.

The enzyme catalyses [eIF5A protein]-L-lysine + spermidine = [eIF5A protein]-deoxyhypusine + propane-1,3-diamine. The protein operates within protein modification; eIF5A hypusination. Its function is as follows. Catalyzes the NAD-dependent oxidative cleavage of spermidine and the subsequent transfer of the butylamine moiety of spermidine to the epsilon-amino group of a specific lysine residue of the eIF-5A precursor protein to form the intermediate deoxyhypusine residue. Also able to produce homospermidine from putrescine. This Senecio vernalis (Spring groundsel) protein is Deoxyhypusine synthase (DHS1).